Consider the following 1368-residue polypeptide: MQYSFTEKKRIRKSFAKRPIVHQVPFLLATQLESFSTFLQADVLAAQRKPEGLQAAFTSVFPIVSHNGFARLEFVSYALSAPAFNIKECQQRGLTYCSALRAKVRLVILDKESPNKPVVKEVKEQEVYMGEMPLMTPTGSFVINGTERVIVSQLHRSPGVFFEHDKGKTHSSGKLLFSARIIPYRGSWLDFEFDPKDILYFRVDRRRKMPVTILLKAIGLTPEQILANFFVFDNFTLMDEGAQLEFVPERLRGEVARFDITDRDGKVIVQKDKRINAKHIRDLEAAKTKFISVPEDYLLGRVLAKNVVDGDTGEVIASANDEVTESVLEKLREAGIKDIQTLYTNDLDQGPYISSTLRVDETTDRTAARIAIYRMMRPGEPPTEEAVEALFNRLFYSEEAYDLSKVGRMKFNRRVSRDEITGPMTLQDDDILATIKILVELRNGKGEVDDIDHLGNRRVRCVGELAENQFRAGLVRVERAVKERLGQAESENLMPHDLINSKPISSAIREFFGSSQLSQFMDQTNPLSEITHKRRVSALGPGGLTRERAGFEVRDVHPTHYGRVCPIETPEGPNIGLINSLALYAHLNEYGFLETPYRKVVDSKVTDQIDYLSAIEEGRYMIAQANAAIDENGQLIDELVSSREAGETMMVTPDRIQYMDVAPSQIVSVAASLIPFLEHDDANRALMGSNMQRQAVPCLRPEKPVVGTGIERTCAVDSGTTVQAFRGGVVDYVDAGRIVIRVNDDEAVAGEVGVDIYNLIKYTRSNQNTNINQRPIVKMGDKVSRGDVLADGASTDLGELALGQNMLIAFMPWNGYNFEDSILISEKVVADDRYTSIHIEELNVVARDTKLGPEEITRDISNLAEVQLGRLDESGIVYIGAEVEAGDVLVGKVTPKGETQLTPEEKLLRAIFGEKASDVKDTSLRVPSGMSGTVIDVQVFTREGIQRDKRAQQIIDDELKRYRLDLNDQLRIVEGDAFQRLARMLVGKVANGGPKKLAKGTKIDQAYLEDLDHYHWFDIRLADDEAAAQLEAIKNSIEEKRHQFDLAFEEKRKKLTQGDELPPGVLKMVKVYLAVKRRLQPGDKMAGRHGNKGVVSKIVPIEDMPYMADGRPADVVLNPLGVPSRMNVGQVLEVHLGWAAKGLGWRIGEMLQRQAKIEEMRVFLTKIYNDSGRQEDLESFTDEEILELAKNLREGVPFATPVFDGATEEEMGKMLDLAFPDDIAEQLGMNPSKNQVRLYDGRTGEMFERRVTLGYMHYLKLHHLVDDKMHARSTGPYSLVTQQPLGGKAQFGGQRFGEMEVWALEAYGASYVLQEMLTVKSDDVNGRTKVYENLVKGDHVIDAGMPESFNVLVKEIRSLGIDIDLDRN.

The protein belongs to the RNA polymerase beta chain family. The RNAP catalytic core consists of 2 alpha, 1 beta, 1 beta' and 1 omega subunit. When a sigma factor is associated with the core the holoenzyme is formed, which can initiate transcription.

The catalysed reaction is RNA(n) + a ribonucleoside 5'-triphosphate = RNA(n+1) + diphosphate. In terms of biological role, DNA-dependent RNA polymerase catalyzes the transcription of DNA into RNA using the four ribonucleoside triphosphates as substrates. This is DNA-directed RNA polymerase subunit beta from Burkholderia lata (strain ATCC 17760 / DSM 23089 / LMG 22485 / NCIMB 9086 / R18194 / 383).